Here is a 384-residue protein sequence, read N- to C-terminus: 8-amino-7-oxononanoate synthase (384 aa).

Residue arginine 21 coordinates substrate. Glycine 108–phenylalanine 109 is a pyridoxal 5'-phosphate binding site. Residue histidine 133 coordinates substrate. Positions 179, 207, and 233 each coordinate pyridoxal 5'-phosphate. At lysine 236 the chain carries N6-(pyridoxal phosphate)lysine. Residue threonine 352 participates in substrate binding.

Belongs to the class-II pyridoxal-phosphate-dependent aminotransferase family. BioF subfamily. In terms of assembly, homodimer. Requires pyridoxal 5'-phosphate as cofactor.

It catalyses the reaction 6-carboxyhexanoyl-[ACP] + L-alanine + H(+) = (8S)-8-amino-7-oxononanoate + holo-[ACP] + CO2. It participates in cofactor biosynthesis; biotin biosynthesis. Functionally, catalyzes the decarboxylative condensation of pimeloyl-[acyl-carrier protein] and L-alanine to produce 8-amino-7-oxononanoate (AON), [acyl-carrier protein], and carbon dioxide. The polypeptide is 8-amino-7-oxononanoate synthase (Escherichia coli O7:K1 (strain IAI39 / ExPEC)).